The sequence spans 142 residues: Hemoglobin subunit alpha (142 aa).

In terms of domain architecture, Globin spans Val2–Arg142. His60 is a binding site for O2. His89 contacts heme b.

This sequence belongs to the globin family. Heterotetramer of two alpha chains and two beta chains. In terms of tissue distribution, red blood cells.

Functionally, involved in oxygen transport from gills to the various peripheral tissues. The polypeptide is Hemoglobin subunit alpha (hba) (Hemitrygon akajei (Red stingray)).